A 272-amino-acid polypeptide reads, in one-letter code: MASSSSNRQFSHRNVNTFLTYPHCPENPEIVCQMIWELVGRWTPKYIICAQEAHKDGDMHLHALLQTEKPVRITDSRFFDIEGFHPNIQSAKSVNKVRDYILKEPLAVFERGTFIPRKSSFQGNPSKGNSEKKPSKDEIMREIISHSTSKLEYLSMIRKEFPYDWATKLQYFEYSANKLFPEIQEEFISPHPPSSPDLLCNESIKDWLQPNIFQVSPESYMLLQPTCYTLEDAISDLEWMDKLSSQQMKEQESRASTSSVQQELGNLLGPEA.

The CRESS-DNA virus Rep endonuclease domain occupies 11-114; that stretch reads SHRNVNTFLT…PLAVFERGTF (104 aa). The RCR-1 motif lies at 18–21; that stretch reads FLTY. A divalent metal cation contacts are provided by E52, H60, and H62. The RCR-2 motif lies at 60–62; that stretch reads HLH. The For DNA cleavage activity role is filled by Y100. Positions 100-103 match the RCR-3 motif; sequence YILK. Residue E104 participates in a divalent metal cation binding. Polar residues predominate over residues 119–128; sequence SSFQGNPSKG. Residues 119-138 form a disordered region; it reads SSFQGNPSKGNSEKKPSKDE. The segment covering 129 to 138 has biased composition (basic and acidic residues); the sequence is NSEKKPSKDE. The segment at 175 to 187 is oligomerization; that stretch reads SANKLFPEIQEEF. Positions 198–202 match the LXCXE motif, interaction with host RBR1 motif; it reads LLCNE. The transactivation stretch occupies residues 221 to 230; sequence MLLQPTCYTL. Polar residues predominate over residues 245 to 264; sequence SQQMKEQESRASTSSVQQEL. A disordered region spans residues 245-272; it reads SQQMKEQESRASTSSVQQELGNLLGPEA.

This sequence belongs to the geminiviridae Rep protein family. Homooligomer. Interacts (via LXCXE domain) with host retinoblastoma-related protein 1 (RBR1), and may thereby deregulate the host cell cycle. Part of the C- and V-complexes which are RepA-Rep-DNA complexes involved in the c-sense and v-sense transcription. It depends on Mg(2+) as a cofactor. Requires Mn(2+) as cofactor.

The protein resides in the host nucleus. Its subcellular location is the host cytoplasm. Functionally, implicated in enhancement of V-sense gene expression. Acts a an inhibitor of C-sense gene transcription. In Avena sativa (Oat), this protein is Replication-associated protein A.